A 418-amino-acid polypeptide reads, in one-letter code: Phosphoglycerate kinase (418 aa).

Residues 18–20 (DFN), arginine 34, 57–60 (HLGR), arginine 115, and arginine 171 contribute to the substrate site. ATP contacts are provided by residues lysine 224, glycine 315, glutamate 346, and 375 to 378 (GGDS).

This sequence belongs to the phosphoglycerate kinase family. Monomer.

It is found in the cytoplasm. The enzyme catalyses (2R)-3-phosphoglycerate + ATP = (2R)-3-phospho-glyceroyl phosphate + ADP. It functions in the pathway carbohydrate degradation; glycolysis; pyruvate from D-glyceraldehyde 3-phosphate: step 2/5. The protein is Phosphoglycerate kinase of Porphyromonas gingivalis (strain ATCC BAA-308 / W83).